The primary structure comprises 310 residues: Oxygen-dependent coproporphyrinogen-III oxidase (310 aa).

Ser97 is a substrate binding site. Positions 101 and 111 each coordinate a divalent metal cation. The Proton donor role is filled by His111. 113–115 (NFR) is a substrate binding site. A divalent metal cation-binding residues include His150 and His180. Positions 245–280 (YVEFNLLYDRGTRFGLEFGGRTESILMSLPPRVVWR) are important for dimerization. Position 263–265 (263–265 (GGR)) interacts with substrate.

The protein belongs to the aerobic coproporphyrinogen-III oxidase family. In terms of assembly, homodimer. Requires a divalent metal cation as cofactor.

It localises to the cytoplasm. It carries out the reaction coproporphyrinogen III + O2 + 2 H(+) = protoporphyrinogen IX + 2 CO2 + 2 H2O. It participates in porphyrin-containing compound metabolism; protoporphyrin-IX biosynthesis; protoporphyrinogen-IX from coproporphyrinogen-III (O2 route): step 1/1. Functionally, involved in the heme biosynthesis. Catalyzes the aerobic oxidative decarboxylation of propionate groups of rings A and B of coproporphyrinogen-III to yield the vinyl groups in protoporphyrinogen-IX. This Coxiella burnetii (strain RSA 331 / Henzerling II) protein is Oxygen-dependent coproporphyrinogen-III oxidase.